The following is a 55-amino-acid chain: uncharacterized protein (55 aa).

This is an uncharacterized protein from Sulfolobus islandicus rod-shaped virus 1 (SIRV-1).